The chain runs to 347 residues: Merozoite surface protein P12 (347 aa).

An N-terminal signal peptide occupies residues 1–25 (MIKLSKKYCLGISFVLYILLSVCEG). 2 consecutive 6-Cys domains span residues 27–172 (KNLT…IPSL) and 175–305 (KVKG…ISSS). Asn-28 carries an N-linked (GlcNAc...) asparagine glycan. 3 disulfides stabilise this stretch: Cys-31-Cys-53, Cys-67-Cys-138, and Cys-81-Cys-136. N-linked (GlcNAc...) asparagine glycans are attached at residues Asn-147, Asn-200, Asn-228, Asn-242, Asn-265, and Asn-322. Cystine bridges form between Cys-179/Cys-211, Cys-225/Cys-286, and Cys-236/Cys-284. Residue Asn-322 is the site of GPI-anchor amidated asparagine attachment. The propeptide at 323–347 (SSFLTLSSYCAFITFIITSFLSFIL) is removed in mature form.

Heterodimer; heterodimerizes with PF41. May form an antiparallel heterodimer with PF41. In terms of processing, processed into a soluble form.

The protein localises to the cell surface. Its subcellular location is the cell membrane. The chain is Merozoite surface protein P12 (PF12) from Plasmodium falciparum (isolate 3D7).